The following is an 837-amino-acid chain: Translation initiation factor IF-2 (837 aa).

The disordered stretch occupies residues 94–253; sequence KRSPDEIEAE…QHGFQNPTGP (160 aa). Residues 95-148 show a composition bias toward basic and acidic residues; sequence RSPDEIEAERQRELEEQRAAEEAERLKAEEAAARQRAEEEARKAEEAARAKAAE. Residues 149–171 are compositionally biased toward low complexity; it reads EAVSAQPAAAVEVAAAEPVAKPA. Composition is skewed to basic and acidic residues over residues 172–188 and 220–229; these read AAEERKKEEPRRVPKRD and STDEESDGYR. Basic residues predominate over residues 230 to 244; the sequence is RGGRGGKSKLKKRNQ. Residues 337–506 form the tr-type G domain; the sequence is TRAPVVTVMG…LLQAEVLELK (170 aa). The segment at 346–353 is G1; that stretch reads GHVDHGKT. 346-353 contacts GTP; sequence GHVDHGKT. Residues 371 to 375 are G2; the sequence is GITQH. The interval 392–395 is G3; it reads DTPG. GTP is bound by residues 392–396 and 446–449; these read DTPGH and NKID. Residues 446–449 form a G4 region; sequence NKID. Residues 482 to 484 form a G5 region; sequence SAK.

This sequence belongs to the TRAFAC class translation factor GTPase superfamily. Classic translation factor GTPase family. IF-2 subfamily.

The protein localises to the cytoplasm. One of the essential components for the initiation of protein synthesis. Protects formylmethionyl-tRNA from spontaneous hydrolysis and promotes its binding to the 30S ribosomal subunits. Also involved in the hydrolysis of GTP during the formation of the 70S ribosomal complex. The protein is Translation initiation factor IF-2 of Pseudomonas paraeruginosa (strain DSM 24068 / PA7) (Pseudomonas aeruginosa (strain PA7)).